The following is a 267-amino-acid chain: 26S proteasome non-ATPase regulatory subunit 8 homolog A (267 aa).

Methionine 1 carries the post-translational modification N-acetylmethionine. Positions 79 to 251 constitute a PCI domain; sequence DAFERDFFQL…APCKEIPSLQ (173 aa).

It belongs to the proteasome subunit S14 family. Component of the 19S regulatory particle (RP/PA700) lid subcomplex of the 26S proteasome. The 26S proteasome is composed of a core protease (CP), known as the 20S proteasome, capped at one or both ends by the 19S regulatory particle (RP/PA700). The RP/PA700 complex is composed of at least 17 different subunits in two subcomplexes, the base and the lid, which form the portions proximal and distal to the 20S proteolytic core, respectively. Interacts with PUB22 and PUB23. Binds to the translation initiation factors TIF3E1. Interacts with UCH1 and UCH2. Ubiquitinated by PUB22 and PUB23. As to expression, ubiquitous with highest expression in flowers.

Functionally, acts as a regulatory subunit of the 26S proteasome which is involved in the ATP-dependent degradation of ubiquitinated proteins. May help to control the degradation of one or more factors that repress cytokinin signaling. Plays an important role for balancing cell expansion with cell proliferation rates during shoot development. This Arabidopsis thaliana (Mouse-ear cress) protein is 26S proteasome non-ATPase regulatory subunit 8 homolog A.